The chain runs to 31 residues: U1-theraphotoxin-Cv1a (31 aa).

3 disulfide bridges follow: Cys-2–Cys-16, Cys-9–Cys-21, and Cys-15–Cys-28.

Expressed by the venom gland.

It localises to the secreted. Insecticidal toxin that induces reversible paralysis in crickets but not in cockroaches and mice. Molecular target unknown. The polypeptide is U1-theraphotoxin-Cv1a (Coremiocnemis valida (Singapore tarantula)).